The primary structure comprises 201 residues: Glutathione peroxidase 1 (201 aa).

Serine 32 carries the phosphoserine modification. Residue selenocysteine 47 is part of the active site. Selenocysteine 47 is a non-standard amino acid (selenocysteine). 3 positions are modified to N6-acetyllysine; alternate: lysine 86, lysine 112, and lysine 146. 3 positions are modified to N6-succinyllysine; alternate: lysine 86, lysine 112, and lysine 146. Phosphoserine is present on residues serine 195 and serine 199.

Belongs to the glutathione peroxidase family. In terms of assembly, homotetramer. Interacts with MIEN1. In terms of processing, during periods of oxidative stress, Sec-47 may react with a superoxide radical, irreversibly lose hydroselenide and be converted to dehydroalanine.

Its subcellular location is the cytoplasm. It is found in the mitochondrion. It catalyses the reaction 2 glutathione + H2O2 = glutathione disulfide + 2 H2O. The catalysed reaction is a hydroperoxy polyunsaturated fatty acid + 2 glutathione = a hydroxy polyunsaturated fatty acid + glutathione disulfide + H2O. The enzyme catalyses tert-butyl hydroperoxide + 2 glutathione = tert-butanol + glutathione disulfide + H2O. It carries out the reaction cumene hydroperoxide + 2 glutathione = 2-phenylpropan-2-ol + glutathione disulfide + H2O. It catalyses the reaction (13S)-hydroperoxy-(9Z,11E)-octadecadienoate + 2 glutathione = (13S)-hydroxy-(9Z,11E)-octadecadienoate + glutathione disulfide + H2O. The catalysed reaction is (9S)-hydroperoxy-(10E,12Z)-octadecadienoate + 2 glutathione = (9S)-hydroxy-(10E,12Z)-octadecadienoate + glutathione disulfide + H2O. The enzyme catalyses (5S)-hydroperoxy-(6E,8Z,11Z,14Z)-eicosatetraenoate + 2 glutathione = (5S)-hydroxy-(6E,8Z,11Z,14Z)-eicosatetraenoate + glutathione disulfide + H2O. It carries out the reaction (12S)-hydroperoxy-(5Z,8Z,10E,14Z)-eicosatetraenoate + 2 glutathione = (12S)-hydroxy-(5Z,8Z,10E,14Z)-eicosatetraenoate + glutathione disulfide + H2O. It catalyses the reaction (12R)-hydroperoxy-(5Z,8Z,10E,14Z)-eicosatetraenoate + 2 glutathione = (12R)-hydroxy-(5Z,8Z,10E,14Z)-eicosatetraenoate + glutathione disulfide + H2O. The catalysed reaction is (15S)-hydroperoxy-(5Z,8Z,11Z,13E)-eicosatetraenoate + 2 glutathione = (15S)-hydroxy-(5Z,8Z,11Z,13E)-eicosatetraenoate + glutathione disulfide + H2O. The enzyme catalyses (5S)-hydroperoxy-(6E,8Z,11Z,14Z,17Z)-eicosapentaenoate + 2 glutathione = (5S)-hydroxy-(6E,8Z,11Z,14Z,17Z)-eicosapentaenoate + glutathione disulfide + H2O. It carries out the reaction (12S)-hydroperoxy-(5Z,8Z,10E,14Z,17Z)-eicosapentaenoate + 2 glutathione = (12S)-hydroxy-(5Z,8Z,10E,14Z,17Z)-eicosapentaenoate + glutathione disulfide + H2O. It catalyses the reaction (15S)-hydroperoxy-(5Z,8Z,11Z,13E,17Z)-eicosapentaenoate + 2 glutathione = (15S)-hydroxy-(5Z,8Z,11Z,13E,17Z)-eicosapentaenoate + glutathione disulfide + H2O. The catalysed reaction is (15S)-hydroperoxy-(11Z,13E)-eicosadienoate + 2 glutathione = (15S)-hydroxy-(11Z,13E)-eicosadienoate + glutathione disulfide + H2O. The enzyme catalyses (17S)-hydroperoxy-(4Z,7Z,10Z,13Z,15E,19Z)-docosahexaenoate + 2 glutathione = (17S)-hydroxy-(4Z,7Z,10Z,13Z,15E,19Z)-docosahexaenoate + glutathione disulfide + H2O. Catalyzes the reduction of hydroperoxides in a glutathione-dependent manner thus regulating cellular redox homeostasis. Can reduce small soluble hydroperoxides such as H2O2, cumene hydroperoxide and tert-butyl hydroperoxide, as well as several fatty acid-derived hydroperoxides. In platelets catalyzes the reduction of 12-hydroperoxyeicosatetraenoic acid, the primary product of the arachidonate 12-lipoxygenase pathway. This Macaca fuscata fuscata (Japanese macaque) protein is Glutathione peroxidase 1 (GPX1).